We begin with the raw amino-acid sequence, 805 residues long: FAD-dependent monooxygenase verC1 (805 aa).

Residues 1–20 (MTFRVIIVGGGVAGLTLASA) form the signal peptide. 3 residues coordinate FAD: Glu32, Ala46, and Arg107. Asn132 carries an N-linked (GlcNAc...) asparagine glycan. Residue Tyr214 is part of the active site. 2 residues coordinate FAD: Asp306 and Ala319. A run of 7 helical transmembrane segments spans residues 551-571 (ALTM…AGLG), 604-624 (IAVL…AFFW), 632-652 (SWLF…YLFS), 671-691 (LPVI…FWMW), 703-723 (VFFP…VCAI), 726-746 (WDML…IWDL), and 761-781 (IYGV…LGWL).

Belongs to the paxM FAD-dependent monooxygenase family.

It is found in the membrane. The protein operates within secondary metabolite biosynthesis; terpenoid biosynthesis. It functions in the pathway mycotoxin biosynthesis. FAD-dependent monooxygenase; part of the gene cluster that mediates the biosynthesis of the neurotoxin verrucosidin, a methylated alpha-pyrone polyketide that inhibits oxidative phosphorylation in mitochondria and thereby causes neurological diseases. The carbon backbone of verrucosidin is synthesized by the HR-PKS verA, and further modified by the other verrucodidin cluster enzymes. This is FAD-dependent monooxygenase verC1 from Penicillium polonicum.